The sequence spans 365 residues: Carbamoyl phosphate synthase small chain (365 aa).

CPSase regions lie at residues 1-166 (MKRQ…PSPG) and 1-169 (MKRQ…GRGH). Positions 45, 218, and 220 each coordinate L-glutamine. One can recognise a Glutamine amidotransferase type-1 domain in the interval 170 to 357 (RVVLVDFGMK…LTMIENFKKE (188 aa)). The Nucleophile role is filled by Cys-245. The L-glutamine site is built by Leu-246, Gln-249, Asn-287, Gly-289, and Tyr-290. Residues His-330 and Glu-332 contribute to the active site.

It belongs to the CarA family. As to quaternary structure, composed of two chains; the small (or glutamine) chain promotes the hydrolysis of glutamine to ammonia, which is used by the large (or ammonia) chain to synthesize carbamoyl phosphate. Tetramer of heterodimers (alpha,beta)4.

It carries out the reaction hydrogencarbonate + L-glutamine + 2 ATP + H2O = carbamoyl phosphate + L-glutamate + 2 ADP + phosphate + 2 H(+). The catalysed reaction is L-glutamine + H2O = L-glutamate + NH4(+). The protein operates within amino-acid biosynthesis; L-arginine biosynthesis; carbamoyl phosphate from bicarbonate: step 1/1. It functions in the pathway pyrimidine metabolism; UMP biosynthesis via de novo pathway; (S)-dihydroorotate from bicarbonate: step 1/3. Its function is as follows. Small subunit of the glutamine-dependent carbamoyl phosphate synthetase (CPSase). CPSase catalyzes the formation of carbamoyl phosphate from the ammonia moiety of glutamine, carbonate, and phosphate donated by ATP, constituting the first step of 2 biosynthetic pathways, one leading to arginine and/or urea and the other to pyrimidine nucleotides. The small subunit (glutamine amidotransferase) binds and cleaves glutamine to supply the large subunit with the substrate ammonia. The protein is Carbamoyl phosphate synthase small chain of Bacillus cereus (strain ATCC 14579 / DSM 31 / CCUG 7414 / JCM 2152 / NBRC 15305 / NCIMB 9373 / NCTC 2599 / NRRL B-3711).